A 309-amino-acid chain; its full sequence is Methionyl-tRNA formyltransferase (309 aa).

A (6S)-5,6,7,8-tetrahydrofolate-binding site is contributed by 109 to 112 (SLLP).

The protein belongs to the Fmt family.

It catalyses the reaction L-methionyl-tRNA(fMet) + (6R)-10-formyltetrahydrofolate = N-formyl-L-methionyl-tRNA(fMet) + (6S)-5,6,7,8-tetrahydrofolate + H(+). Attaches a formyl group to the free amino group of methionyl-tRNA(fMet). The formyl group appears to play a dual role in the initiator identity of N-formylmethionyl-tRNA by promoting its recognition by IF2 and preventing the misappropriation of this tRNA by the elongation apparatus. The chain is Methionyl-tRNA formyltransferase from Thiobacillus denitrificans (strain ATCC 25259 / T1).